The sequence spans 322 residues: Probable F-box protein At1g60180 (322 aa).

The F-box domain maps to Phe-45 to Leu-88.

The chain is Probable F-box protein At1g60180 from Arabidopsis thaliana (Mouse-ear cress).